The primary structure comprises 541 residues: Molybdate transporter 1 (541 aa).

5 helical membrane passes run 24–44 (LLLSEISGSLGDLGTLLPLLL), 58–78 (LLFSGLFNILTGLVFGVPLPV), 98–118 (TVAAGAWVGFAVLLLGGTGGL), 137–157 (AGMSLVVAAGGGMVRPLGWLW), and 168–188 (GLGEWLDSRALAVLAFGGLVV). A disordered region spans residues 193–213 (QQQQQQQSGEKPQERRKKRSK). Helical transmembrane passes span 214–234 (MPVQVPYALVLFLVGIMFAVV) and 287–307 (MAIAQLPLTTLNSIIAASALA). The interval 317–366 (PQLYADDESSDSPLSPSPSASSSSLSSAPPQTPSAETPKPLSSPTSAEEG) is disordered. A compositionally biased stretch (low complexity) spans 327–351 (DSPLSPSPSASSSSLSSAPPQTPSA). The next 2 helical transmembrane spans lie at 413–433 (IILLGLTKFLLGLFFPGPGLL) and 435–455 (LLGKFPKAFLGVMVLGAGVEL). Residues 510 to 541 (TEKGRGGEQGLLGEEEEEEEQGRVDEESPLLR) form a disordered region.

This sequence belongs to the SLC26A/SulP transporter (TC 2.A.53) family.

It is found in the vacuole membrane. Functionally, exports stored molybdate from the vacuole into the cytosol, making it available for molybdate cofactor (Moco) biosynthesis. Plays a role in molybdate homeostasis as high cytosolic levels of molybdate are toxic to cells. Not required for molybdate import into cells. This Neurospora crassa (strain ATCC 24698 / 74-OR23-1A / CBS 708.71 / DSM 1257 / FGSC 987) protein is Molybdate transporter 1.